A 360-amino-acid chain; its full sequence is Photosystem II protein D1 (360 aa).

The next 3 helical transmembrane spans lie at 29–46 (YIGW…TATS), 118–133 (HFLL…EWEL), and 142–156 (WIFV…AASA). H118 provides a ligand contact to chlorophyll a. Y126 lines the pheophytin a pocket. D170 and E189 together coordinate [CaMn4O5] cluster. Residues 197-218 (FHMAGVAGVFGGSLFSAMHGSL) form a helical membrane-spanning segment. Residue H198 coordinates chlorophyll a. A quinone contacts are provided by residues H215 and 264-265 (SF). H215 is a binding site for Fe cation. Residue H272 coordinates Fe cation. A helical membrane pass occupies residues 274 to 288 (FLALWPVVGIWLTAM). 4 residues coordinate [CaMn4O5] cluster: H332, E333, D342, and A344. Positions 345–360 (SGEVLPVALTAPAVNG) are excised as a propeptide.

Belongs to the reaction center PufL/M/PsbA/D family. As to quaternary structure, PSII is composed of 1 copy each of membrane proteins PsbA, PsbB, PsbC, PsbD, PsbE, PsbF, PsbH, PsbI, PsbJ, PsbK, PsbL, PsbM, PsbT, PsbX, PsbY, PsbZ, Psb30/Ycf12, at least 3 peripheral proteins of the oxygen-evolving complex and a large number of cofactors. It forms dimeric complexes. The D1/D2 heterodimer binds P680, chlorophylls that are the primary electron donor of PSII, and subsequent electron acceptors. It shares a non-heme iron and each subunit binds pheophytin, quinone, additional chlorophylls, carotenoids and lipids. D1 provides most of the ligands for the Mn4-Ca-O5 cluster of the oxygen-evolving complex (OEC). There is also a Cl(-1) ion associated with D1 and D2, which is required for oxygen evolution. The PSII complex binds additional chlorophylls, carotenoids and specific lipids. is required as a cofactor. In terms of processing, tyr-161 forms a radical intermediate that is referred to as redox-active TyrZ, YZ or Y-Z. C-terminally processed by CTPA; processing is essential to allow assembly of the oxygen-evolving complex and thus photosynthetic growth.

It localises to the plastid. It is found in the chloroplast thylakoid membrane. The enzyme catalyses 2 a plastoquinone + 4 hnu + 2 H2O = 2 a plastoquinol + O2. Photosystem II (PSII) is a light-driven water:plastoquinone oxidoreductase that uses light energy to abstract electrons from H(2)O, generating O(2) and a proton gradient subsequently used for ATP formation. It consists of a core antenna complex that captures photons, and an electron transfer chain that converts photonic excitation into a charge separation. The D1/D2 (PsbA/PsbD) reaction center heterodimer binds P680, the primary electron donor of PSII as well as several subsequent electron acceptors. This is Photosystem II protein D1 from Phaeodactylum tricornutum (strain CCAP 1055/1).